We begin with the raw amino-acid sequence, 722 residues long: Bifunctional UDP-N-acetylglucosamine 2-epimerase/N-acetylmannosamine kinase (722 aa).

Residues Arg19, Ser23, Arg113, His220, and Asn253 each contribute to the UDP site. CMP-N-acetyl-beta-neuraminate contacts are provided by Lys259, Glu271, Lys280, and His281. 5 residues coordinate UDP: Val282, Ser301, Ser302, Glu307, and Arg321. The segment at 406 to 722 (TLSALAVDLG…VLDYTTRRIH (317 aa)) is N-acetylmannosamine kinase. Asp413 provides a ligand contact to Mg(2+). An an N-acyl-D-mannosamine 6-phosphate-binding site is contributed by Gly416. ADP-binding residues include Thr417, Asn418, and Arg420. 6 residues coordinate an N-acyl-D-mannosamine 6-phosphate: Gly476, Arg477, Thr489, Asn516, Asp517, and Gly545. Positions 476, 477, 489, 516, and 517 each coordinate an N-acyl-D-mannosamine. Residue Asp517 is part of the active site. An N-acyl-D-mannosamine contacts are provided by Glu566 and His569. An an N-acyl-D-mannosamine 6-phosphate-binding site is contributed by His569. Positions 569, 579, 581, and 586 each coordinate Zn(2+). Position 588 (Glu588) interacts with an N-acyl-D-mannosamine 6-phosphate. An N-acyl-D-mannosamine is bound at residue Glu588.

It in the N-terminal section; belongs to the UDP-N-acetylglucosamine 2-epimerase family. In the C-terminal section; belongs to the ROK (NagC/XylR) family. As to quaternary structure, homodimer. Homotetramer. Homohexamer. The hexameric form exhibits both enzyme activities, whereas the dimeric form only catalyzes the phosphorylation of N-acyl-D-mannosamine. In terms of processing, phosphorylated. Phosphorylation by PKC activates the UDP-N-acetylglucosamine 2-epimerase activity. As to expression, widely expressed. Highest expression is observed in liver.

It localises to the cytoplasm. It is found in the cytosol. It carries out the reaction UDP-N-acetyl-alpha-D-glucosamine + H2O = aldehydo-N-acetyl-D-mannosamine + UDP + H(+). It catalyses the reaction an N-acyl-D-mannosamine + ATP = an N-acyl-D-mannosamine 6-phosphate + ADP + H(+). It functions in the pathway amino-sugar metabolism; N-acetylneuraminate biosynthesis. Its activity is regulated as follows. The UDP-N-acetylglucosamine 2-epimerase activity, in contrast to the N-acetylmannosamine kinase activity, exhibits allosteric regulation by cytidine monophosphate-N-acetylneuraminic acid (CMP-Neu5Ac), the end product of neuraminic acid biosynthesis. Moreover, the activity is contingent upon the oligomeric state of the enzyme. The monomeric form is inactive, while the dimeric form selectively catalyzes the phosphorylation of N-acetylmannosamine. The hexameric form, on the other hand, demonstrates full proficiency in both enzyme activities. Furthermore, the UDP-N-acetylglucosamine 2-epimerase activity is increased by PKC-mediated phosphorylation. Functionally, bifunctional enzyme that possesses both UDP-N-acetylglucosamine 2-epimerase and N-acetylmannosamine kinase activities, and serves as the initiator of the biosynthetic pathway leading to the production of N-acetylneuraminic acid (NeuAc), a critical precursor in the synthesis of sialic acids. By catalyzing this pivotal and rate-limiting step in sialic acid biosynthesis, this enzyme assumes a pivotal role in governing the regulation of cell surface sialylation. Sialic acids represent a category of negatively charged sugars that reside on the surface of cells as terminal components of glycoconjugates and mediate important functions in various cellular processes, including cell adhesion, signal transduction, and cellular recognition. In Rattus norvegicus (Rat), this protein is Bifunctional UDP-N-acetylglucosamine 2-epimerase/N-acetylmannosamine kinase.